The following is a 388-amino-acid chain: Succinate--CoA ligase [ADP-forming] subunit beta (388 aa).

The 238-residue stretch at 9–246 folds into the ATP-grasp domain; the sequence is KDILRQFGVP…FEEEDPAEVL (238 aa). ATP-binding positions include lysine 46, 53 to 55, glutamate 99, alanine 102, and glutamate 107; that span reads GRG. Residues asparagine 201 and aspartate 215 each contribute to the Mg(2+) site. Residues asparagine 266 and 323–325 each bind substrate; that span reads GIM.

The protein belongs to the succinate/malate CoA ligase beta subunit family. As to quaternary structure, heterotetramer of two alpha and two beta subunits. Mg(2+) is required as a cofactor.

It carries out the reaction succinate + ATP + CoA = succinyl-CoA + ADP + phosphate. The catalysed reaction is GTP + succinate + CoA = succinyl-CoA + GDP + phosphate. The protein operates within carbohydrate metabolism; tricarboxylic acid cycle; succinate from succinyl-CoA (ligase route): step 1/1. Its function is as follows. Succinyl-CoA synthetase functions in the citric acid cycle (TCA), coupling the hydrolysis of succinyl-CoA to the synthesis of either ATP or GTP and thus represents the only step of substrate-level phosphorylation in the TCA. The beta subunit provides nucleotide specificity of the enzyme and binds the substrate succinate, while the binding sites for coenzyme A and phosphate are found in the alpha subunit. The chain is Succinate--CoA ligase [ADP-forming] subunit beta from Verminephrobacter eiseniae (strain EF01-2).